The sequence spans 207 residues: Imidazole glycerol phosphate synthase subunit HisH (207 aa).

Residues 1-206 (MMIVIGYDAG…KEYVYENTAR (206 aa)) form the Glutamine amidotransferase type-1 domain. The active-site Nucleophile is Cys79. Catalysis depends on residues His181 and Glu183.

In terms of assembly, heterodimer of HisH and HisF.

It localises to the cytoplasm. The enzyme catalyses 5-[(5-phospho-1-deoxy-D-ribulos-1-ylimino)methylamino]-1-(5-phospho-beta-D-ribosyl)imidazole-4-carboxamide + L-glutamine = D-erythro-1-(imidazol-4-yl)glycerol 3-phosphate + 5-amino-1-(5-phospho-beta-D-ribosyl)imidazole-4-carboxamide + L-glutamate + H(+). It carries out the reaction L-glutamine + H2O = L-glutamate + NH4(+). It functions in the pathway amino-acid biosynthesis; L-histidine biosynthesis; L-histidine from 5-phospho-alpha-D-ribose 1-diphosphate: step 5/9. In terms of biological role, IGPS catalyzes the conversion of PRFAR and glutamine to IGP, AICAR and glutamate. The HisH subunit catalyzes the hydrolysis of glutamine to glutamate and ammonia as part of the synthesis of IGP and AICAR. The resulting ammonia molecule is channeled to the active site of HisF. This chain is Imidazole glycerol phosphate synthase subunit HisH, found in Streptococcus gordonii (strain Challis / ATCC 35105 / BCRC 15272 / CH1 / DL1 / V288).